A 259-amino-acid polypeptide reads, in one-letter code: Phosphatidylglycerol--prolipoprotein diacylglyceryl transferase (259 aa).

4 helical membrane passes run 12–32 (LAIH…VYLA), 41–61 (ISSD…IVGA), 80–100 (IIAI…GALV), and 109–129 (VLNP…AQAI). Arg131 is a binding site for a 1,2-diacyl-sn-glycero-3-phospho-(1'-sn-glycerol). Helical transmembrane passes span 167–187 (IPTF…IMMW), 194–214 (LLDG…RLVI), and 226–246 (GIRI…IFVI).

Belongs to the Lgt family.

It is found in the cell membrane. The enzyme catalyses L-cysteinyl-[prolipoprotein] + a 1,2-diacyl-sn-glycero-3-phospho-(1'-sn-glycerol) = an S-1,2-diacyl-sn-glyceryl-L-cysteinyl-[prolipoprotein] + sn-glycerol 1-phosphate + H(+). It functions in the pathway protein modification; lipoprotein biosynthesis (diacylglyceryl transfer). Catalyzes the transfer of the diacylglyceryl group from phosphatidylglycerol to the sulfhydryl group of the N-terminal cysteine of a prolipoprotein, the first step in the formation of mature lipoproteins. This chain is Phosphatidylglycerol--prolipoprotein diacylglyceryl transferase, found in Streptococcus pyogenes serotype M3 (strain ATCC BAA-595 / MGAS315).